The following is a 77-amino-acid chain: Serine protease inhibitor 2 (77 aa).

Residues 1–17 (MMFTPLIVLTLLVLATA) form the signal peptide. Disulfide bonds link cysteine 21-cysteine 53, cysteine 30-cysteine 48, cysteine 33-cysteine 44, cysteine 37-cysteine 74, and cysteine 55-cysteine 68. Positions 21 to 74 (CGPNEQWSDCPKCELQCGESDKPCATICGEPKCYCSPDKYRRIPDGRCIRKIQC) constitute a TIL domain.

It is found in the secreted. Its function is as follows. Defends the organism against the host's proteinases. The polypeptide is Serine protease inhibitor 2 (Anisakis simplex (Herring worm)).